The sequence spans 320 residues: Cytochrome f (320 aa).

An N-terminal signal peptide occupies residues 1–35 (MQNRNTFLGVKEQITRSIFVSIMIYVITRASISNA). Heme contacts are provided by Y36, C56, C59, and H60. Residues 286 to 306 (IQGLLFFLASVILAQIFLVLK) traverse the membrane as a helical segment.

This sequence belongs to the cytochrome f family. In terms of assembly, the 4 large subunits of the cytochrome b6-f complex are cytochrome b6, subunit IV (17 kDa polypeptide, petD), cytochrome f and the Rieske protein, while the 4 small subunits are PetG, PetL, PetM and PetN. The complex functions as a dimer. The cofactor is heme.

Its subcellular location is the plastid. It is found in the chloroplast thylakoid membrane. In terms of biological role, component of the cytochrome b6-f complex, which mediates electron transfer between photosystem II (PSII) and photosystem I (PSI), cyclic electron flow around PSI, and state transitions. The protein is Cytochrome f of Dioscorea elephantipes (Elephant's foot yam).